The primary structure comprises 249 residues: Exosome complex component Rrp4 (249 aa).

Residues 72-143 form the S1 motif domain; the sequence is GDTIIGLVED…RTISPVLTVK (72 aa). The region spanning 151-213 is the KH domain; that stretch reads PLGTVMDIMP…EALIEAINII (63 aa).

The protein belongs to the RRP4 family. Component of the archaeal exosome complex. Forms a trimer of Rrp4 and/or Csl4 subunits. The trimer associates with a hexameric ring-like arrangement composed of 3 Rrp41-Rrp42 heterodimers.

Its subcellular location is the cytoplasm. Non-catalytic component of the exosome, which is a complex involved in RNA degradation. Increases the RNA binding and the efficiency of RNA degradation. Confers strong poly(A) specificity to the exosome. The polypeptide is Exosome complex component Rrp4 (Sulfolobus acidocaldarius (strain ATCC 33909 / DSM 639 / JCM 8929 / NBRC 15157 / NCIMB 11770)).